The chain runs to 149 residues: Urease accessory protein UreE (149 aa).

It belongs to the UreE family.

It localises to the cytoplasm. Functionally, involved in urease metallocenter assembly. Binds nickel. Probably functions as a nickel donor during metallocenter assembly. This chain is Urease accessory protein UreE, found in Corynebacterium efficiens (strain DSM 44549 / YS-314 / AJ 12310 / JCM 11189 / NBRC 100395).